We begin with the raw amino-acid sequence, 697 residues long: MVAFGKYLQRKQIEEWSGYYINYKLMKKKVKQYAEQIQGGSQHPRHVLKDFSRMLDTQIETTVLFMLEQQGLLSGRLAKLRESHDAILEQPDISRIFELREAYRDVGRDLLQLLKFVELNAIGLRKILKKFDKRFGYRFADYYVKTRANHPYSQLQQVFKHVGVGAVVGAISRNLHELQENEGSFYSIYDQPVLPAQDPVVEAINNAVDKLTFSTNFLNFLAQHALIMQDDLVTPSEDTIDERSYHFNSLLLNLGNTFLYMVNTYIIVPTADDYSMSLGAAATVCGVVIGSMAVAQVFSSVYFSAWSNKSYFKPLVFSSIALFIGNLMYALAYDANSIALLLLGRVCCGLGSARAVNRRYISDCVPLRIRMQASAGFVSASALGMACGPALAGLLQIKFKFYKFTFNQSTLPGWVMAVAWLFYLVWLCISFREPLRDTEDGEKNNRNETTSDRVESSRVEEGLRLPLLITSGIKPEDEEECDESEESPEDSHKPANSFIEAYRLLTPSVKVQLLIYFMLKYSMEILLSESSVITSYYFSWTTSSVAIFLACLGLTVLPINILVGSYISNMFEDRQILLTSEIIVFLGILFSFNLFVPYTVPQYVISGLIMFVAAEVLEGVNLSLLSRVMSSRLSKGTYNGGLLSTEAGTLARVVADATITLGGYLGRGHLLNATLLPSLVICIGSIVATCCTYNSLY.

The SPX domain maps to 2–145; sequence VAFGKYLQRK…GYRFADYYVK (144 aa). 6 helical membrane passes run 247 to 267, 278 to 298, 315 to 335, 337 to 356, 375 to 395, and 411 to 431; these read FNSL…TYII, LGAA…AQVF, LVFS…AYDA, SIAL…ARAV, AGFV…AGLL, and LPGW…CISF. Positions 439–459 are disordered; it reads EDGEKNNRNETTSDRVESSRV. Transmembrane regions (helical) follow at residues 513 to 533, 544 to 564, 576 to 596, 604 to 624, and 670 to 690; these read LLIY…SSVI, SVAI…ILVG, ILLT…NLFV, VISG…NLSL, and LLNA…VATC.

Belongs to the major facilitator superfamily.

It is found in the membrane. The polypeptide is SPX domain-containing membrane protein At1g63010 (Arabidopsis thaliana (Mouse-ear cress)).